The sequence spans 257 residues: Ribonuclease HII (257 aa).

In terms of domain architecture, RNase H type-2 spans 72-257 (TYIAGIDEVG…FAPIKDMIQK (186 aa)). The a divalent metal cation site is built by Asp-78, Glu-79, and Asp-170.

The protein belongs to the RNase HII family. Mn(2+) is required as a cofactor. Mg(2+) serves as cofactor.

The protein resides in the cytoplasm. It catalyses the reaction Endonucleolytic cleavage to 5'-phosphomonoester.. In terms of biological role, endonuclease that specifically degrades the RNA of RNA-DNA hybrids. The chain is Ribonuclease HII from Bacillus mycoides (strain KBAB4) (Bacillus weihenstephanensis).